Here is a 208-residue protein sequence, read N- to C-terminus: Small ribosomal subunit protein uS4 (208 aa).

Residues 31–51 (SALDKRAYGPGQHGQRRAKTS) form a disordered region. One can recognise an S4 RNA-binding domain in the interval 98–160 (RRLDNVVYRM…TKSNSQVVRA (63 aa)).

It belongs to the universal ribosomal protein uS4 family. In terms of assembly, part of the 30S ribosomal subunit. Contacts protein S5. The interaction surface between S4 and S5 is involved in control of translational fidelity.

Functionally, one of the primary rRNA binding proteins, it binds directly to 16S rRNA where it nucleates assembly of the body of the 30S subunit. With S5 and S12 plays an important role in translational accuracy. This is Small ribosomal subunit protein uS4 from Helicobacter pylori (strain ATCC 700392 / 26695) (Campylobacter pylori).